A 104-amino-acid chain; its full sequence is Transcription elongation factor A protein-like 9 (104 aa).

Residues methionine 1 to glutamate 27 are compositionally biased toward basic and acidic residues. Residues methionine 1–threonine 44 are disordered.

The protein belongs to the TFS-II family. TFA subfamily.

The protein localises to the nucleus. In terms of biological role, may be involved in transcriptional regulation. This is Transcription elongation factor A protein-like 9 from Homo sapiens (Human).